The chain runs to 68 residues: Large ribosomal subunit protein bL35 (68 aa).

This sequence belongs to the bacterial ribosomal protein bL35 family.

This Rickettsia bellii (strain RML369-C) protein is Large ribosomal subunit protein bL35.